Reading from the N-terminus, the 298-residue chain is Bifunctional protein FolD (298 aa).

NADP(+) is bound by residues 166 to 168 (GRS), serine 191, and isoleucine 232.

It belongs to the tetrahydrofolate dehydrogenase/cyclohydrolase family. As to quaternary structure, homodimer.

It catalyses the reaction (6R)-5,10-methylene-5,6,7,8-tetrahydrofolate + NADP(+) = (6R)-5,10-methenyltetrahydrofolate + NADPH. The enzyme catalyses (6R)-5,10-methenyltetrahydrofolate + H2O = (6R)-10-formyltetrahydrofolate + H(+). It functions in the pathway one-carbon metabolism; tetrahydrofolate interconversion. Functionally, catalyzes the oxidation of 5,10-methylenetetrahydrofolate to 5,10-methenyltetrahydrofolate and then the hydrolysis of 5,10-methenyltetrahydrofolate to 10-formyltetrahydrofolate. This chain is Bifunctional protein FolD, found in Parvibaculum lavamentivorans (strain DS-1 / DSM 13023 / NCIMB 13966).